Consider the following 415-residue polypeptide: L-cysteine:1D-myo-inositol 2-amino-2-deoxy-alpha-D-glucopyranoside ligase (415 aa).

Cysteine 43 is a Zn(2+) binding site. L-cysteinyl-5'-AMP is bound by residues 43-46 (CGIT), threonine 58, and 81-83 (NVT). A 'HIGH' region motif is present at residues 45 to 55 (ITPYDATHLGH). A 'ERGGDP' region motif is present at residues 188 to 193 (ERGGDP). L-cysteinyl-5'-AMP is bound at residue tryptophan 229. Residue cysteine 233 coordinates Zn(2+). 251 to 253 (GSD) is a binding site for L-cysteinyl-5'-AMP. Zn(2+) is bound at residue histidine 258. Valine 285 is a binding site for L-cysteinyl-5'-AMP. The 'KMSKS' region motif lies at 291–295 (KMSKS).

Belongs to the class-I aminoacyl-tRNA synthetase family. MshC subfamily. In terms of assembly, monomer. Zn(2+) is required as a cofactor.

It catalyses the reaction 1D-myo-inositol 2-amino-2-deoxy-alpha-D-glucopyranoside + L-cysteine + ATP = 1D-myo-inositol 2-(L-cysteinylamino)-2-deoxy-alpha-D-glucopyranoside + AMP + diphosphate + H(+). Its function is as follows. Catalyzes the ATP-dependent condensation of GlcN-Ins and L-cysteine to form L-Cys-GlcN-Ins. In Cellulomonas flavigena (strain ATCC 482 / DSM 20109 / BCRC 11376 / JCM 18109 / NBRC 3775 / NCIMB 8073 / NRS 134), this protein is L-cysteine:1D-myo-inositol 2-amino-2-deoxy-alpha-D-glucopyranoside ligase.